The primary structure comprises 178 residues: Nascent polypeptide-associated complex subunit alpha (178 aa).

Residues 20–84 enclose the NAC-A/B domain; sequence SKNEKKAREL…AKVDDMNKRI (65 aa). Low complexity predominate over residues 87–104; that stretch reads AQAQQEQQEALTKAAADA. The tract at residues 87 to 142 is disordered; sequence AQAQQEQQEALTKAAADAETADKSPESITNDLQNASLEDKTVEEDEGEVDETGLDS. Residues 112–122 are compositionally biased toward polar residues; the sequence is ESITNDLQNAS. The segment covering 127 to 139 has biased composition (acidic residues); the sequence is TVEEDEGEVDETG. One can recognise a UBA domain in the interval 140–178; it reads LDSKDIEIIVEQTQVSRAKAVKALRAHKGDMVNAIMELS.

The protein belongs to the NAC-alpha family. As to quaternary structure, part of the nascent polypeptide-associated complex (NAC), consisting of EGD2 and EGD1. NAC associates with ribosomes via EGD1.

The protein resides in the cytoplasm. It is found in the nucleus. Functionally, component of the nascent polypeptide-associated complex (NAC), a dynamic component of the ribosomal exit tunnel, protecting the emerging polypeptides from interaction with other cytoplasmic proteins to ensure appropriate nascent protein targeting. The NAC complex also promotes mitochondrial protein import by enhancing productive ribosome interactions with the outer mitochondrial membrane and blocks the inappropriate interaction of ribosomes translating non-secretory nascent polypeptides with translocation sites in the membrane of the endoplasmic reticulum. EGD2 may also be involved in transcription regulation. This Meyerozyma guilliermondii (strain ATCC 6260 / CBS 566 / DSM 6381 / JCM 1539 / NBRC 10279 / NRRL Y-324) (Yeast) protein is Nascent polypeptide-associated complex subunit alpha (EGD2).